A 94-amino-acid chain; its full sequence is Co-chaperonin GroES (94 aa).

The protein belongs to the GroES chaperonin family. Heptamer of 7 subunits arranged in a ring. Interacts with the chaperonin GroEL.

The protein localises to the cytoplasm. Together with the chaperonin GroEL, plays an essential role in assisting protein folding. The GroEL-GroES system forms a nano-cage that allows encapsulation of the non-native substrate proteins and provides a physical environment optimized to promote and accelerate protein folding. GroES binds to the apical surface of the GroEL ring, thereby capping the opening of the GroEL channel. The chain is Co-chaperonin GroES from Streptococcus pneumoniae serotype 19F (strain G54).